A 220-amino-acid chain; its full sequence is UPF0319 protein CKO_02102 (220 aa).

A signal peptide spans 1-20 (MKTGIITMLFVLYLPVTAFA).

Belongs to the UPF0319 family.

The protein is UPF0319 protein CKO_02102 of Citrobacter koseri (strain ATCC BAA-895 / CDC 4225-83 / SGSC4696).